The sequence spans 77 residues: Small ribosomal subunit protein bS20 (77 aa).

It belongs to the bacterial ribosomal protein bS20 family.

Functionally, binds directly to 16S ribosomal RNA. The protein is Small ribosomal subunit protein bS20 of Streptococcus agalactiae serotype Ia (strain ATCC 27591 / A909 / CDC SS700).